Here is a 352-residue protein sequence, read N- to C-terminus: tRNA uridine(34) hydroxylase (352 aa).

In terms of domain architecture, Rhodanese spans 144–238 (SDPDVILIDT…YLEEVPASDS (95 aa)). C198 functions as the Cysteine persulfide intermediate in the catalytic mechanism.

This sequence belongs to the TrhO family.

It carries out the reaction uridine(34) in tRNA + AH2 + O2 = 5-hydroxyuridine(34) in tRNA + A + H2O. Its function is as follows. Catalyzes oxygen-dependent 5-hydroxyuridine (ho5U) modification at position 34 in tRNAs. The protein is tRNA uridine(34) hydroxylase of Psychrobacter arcticus (strain DSM 17307 / VKM B-2377 / 273-4).